Here is a 514-residue protein sequence, read N- to C-terminus: Membrane-bound lytic murein transglycosylase F (514 aa).

Residues 1–30 (MLSNNPLITKFRELFTVALVLALLSGCQWQ) form the signal peptide. The tract at residues 31–271 (DDNLTDLEKI…QLEEKYFGHV (241 aa)) is non-LT domain. The interval 272–514 (GSFDYVDTRA…KTIEDPGPSQ (243 aa)) is LT domain. The active site involves Glu316. A disordered region spans residues 482–514 (PVPPRQANVDGSLNNEAAISSAEKTIEDPGPSQ). Residues 490–499 (VDGSLNNEAA) are compositionally biased toward polar residues.

This sequence in the N-terminal section; belongs to the bacterial solute-binding protein 3 family. The protein in the C-terminal section; belongs to the transglycosylase Slt family.

The protein localises to the cell outer membrane. The catalysed reaction is Exolytic cleavage of the (1-&gt;4)-beta-glycosidic linkage between N-acetylmuramic acid (MurNAc) and N-acetylglucosamine (GlcNAc) residues in peptidoglycan, from either the reducing or the non-reducing ends of the peptidoglycan chains, with concomitant formation of a 1,6-anhydrobond in the MurNAc residue.. Functionally, murein-degrading enzyme that degrades murein glycan strands and insoluble, high-molecular weight murein sacculi, with the concomitant formation of a 1,6-anhydromuramoyl product. Lytic transglycosylases (LTs) play an integral role in the metabolism of the peptidoglycan (PG) sacculus. Their lytic action creates space within the PG sacculus to allow for its expansion as well as for the insertion of various structures such as secretion systems and flagella. The sequence is that of Membrane-bound lytic murein transglycosylase F from Photobacterium profundum (strain SS9).